The chain runs to 389 residues: 5-amino-6-(D-ribitylamino)uracil--L-tyrosine 4-hydroxyphenyl transferase (389 aa).

The Radical SAM core domain maps to Val-56–Arg-298. 3 residues coordinate [4Fe-4S] cluster: Cys-70, Cys-74, and Cys-77.

It belongs to the radical SAM superfamily. CofH family. As to quaternary structure, consists of two subunits, CofG and CofH. Requires [4Fe-4S] cluster as cofactor.

It catalyses the reaction 5-amino-6-(D-ribitylamino)uracil + L-tyrosine + S-adenosyl-L-methionine = 5-amino-5-(4-hydroxybenzyl)-6-(D-ribitylimino)-5,6-dihydrouracil + 2-iminoacetate + 5'-deoxyadenosine + L-methionine + H(+). It functions in the pathway cofactor biosynthesis; coenzyme F0 biosynthesis. Its function is as follows. Catalyzes the radical-mediated synthesis of 5-amino-5-(4-hydroxybenzyl)-6-(D-ribitylimino)-5,6-dihydrouracil from 5-amino-6-(D-ribitylamino)uracil and L-tyrosine. The sequence is that of 5-amino-6-(D-ribitylamino)uracil--L-tyrosine 4-hydroxyphenyl transferase from Gloeobacter violaceus (strain ATCC 29082 / PCC 7421).